Reading from the N-terminus, the 402-residue chain is Multidrug resistance protein MdtH (402 aa).

Over Met1–Lys12 the chain is Cytoplasmic. A helical membrane pass occupies residues Tyr13–Ile33. Residues Ser34–Glu98 are Periplasmic-facing. A helical transmembrane segment spans residues Pro99–Phe116. At Asp117–Ser138 the chain is on the cytoplasmic side. A helical membrane pass occupies residues Leu139–Leu159. Residues Gln160 to Arg164 lie on the Periplasmic side of the membrane. The helical transmembrane segment at Leu165 to Leu185 threads the bilayer. Over Pro186–Tyr213 the chain is Cytoplasmic. A helical membrane pass occupies residues Val214–Met234. The Periplasmic portion of the chain corresponds to Val235 to Ser243. A helical transmembrane segment spans residues Ala244–Ala264. The Cytoplasmic segment spans residues Arg265 to Arg276. The chain crosses the membrane as a helical span at residues Leu277 to Leu297. At Gln298–Gln299 the chain is on the periplasmic side. The chain crosses the membrane as a helical span at residues Leu300–Thr320. Over Leu321 to Arg339 the chain is Cytoplasmic. The helical transmembrane segment at Leu340–Gly360 threads the bilayer. Residues Lys361 to Glu367 are Periplasmic-facing. A helical transmembrane segment spans residues Leu368–Phe388. At Ser389–Ala402 the chain is on the cytoplasmic side.

This sequence belongs to the major facilitator superfamily. DHA1 family. MdtH (TC 2.A.1.2.21) subfamily.

The protein resides in the cell inner membrane. The sequence is that of Multidrug resistance protein MdtH from Shigella sonnei (strain Ss046).